We begin with the raw amino-acid sequence, 715 residues long: 1,4-alpha-glucan branching enzyme GlgB (715 aa).

Catalysis depends on D396, which acts as the Nucleophile. The active-site Proton donor is E449.

It belongs to the glycosyl hydrolase 13 family. GlgB subfamily. Monomer.

It carries out the reaction Transfers a segment of a (1-&gt;4)-alpha-D-glucan chain to a primary hydroxy group in a similar glucan chain.. The protein operates within glycan biosynthesis; glycogen biosynthesis. Functionally, catalyzes the formation of the alpha-1,6-glucosidic linkages in glycogen by scission of a 1,4-alpha-linked oligosaccharide from growing alpha-1,4-glucan chains and the subsequent attachment of the oligosaccharide to the alpha-1,6 position. The chain is 1,4-alpha-glucan branching enzyme GlgB from Vibrio vulnificus (strain YJ016).